The following is a 507-amino-acid chain: Probable serine/threonine-protein kinase DDB_G0268078 (507 aa).

The region spanning 4-286 (YQFIKQVGDG…PLQALQHRYF (283 aa)) is the Protein kinase domain. ATP-binding positions include 10–18 (VGDGAYGDV) and lysine 33. Aspartate 125 acts as the Proton acceptor in catalysis. Positions 323 to 347 (NYSNNNNNNNLNSNSENLNNVNKNN) are enriched in low complexity. 3 disordered regions span residues 323-364 (NYSN…PKNS), 381-404 (NVNN…KLDS), and 428-507 (QQPP…NSKL). A compositionally biased stretch (polar residues) spans 348 to 361 (QQPHSPQKIQTPKP). Residues 381–399 (NVNNNNNNYNSNTTSGYYN) show a composition bias toward low complexity. The span at 429–450 (QPPPQSQPPQSQPPPQSQPPPI) shows a compositional bias: pro residues. Over residues 451 to 470 (LTQQQQQQQQQQQQQQQLPS) the composition is skewed to low complexity. Composition is skewed to polar residues over residues 471–481 (KTTIYHNTNHL) and 491–507 (RGIS…NSKL).

The protein belongs to the protein kinase superfamily. CMGC Ser/Thr protein kinase family. CDC2/CDKX subfamily.

The catalysed reaction is L-seryl-[protein] + ATP = O-phospho-L-seryl-[protein] + ADP + H(+). It carries out the reaction L-threonyl-[protein] + ATP = O-phospho-L-threonyl-[protein] + ADP + H(+). This chain is Probable serine/threonine-protein kinase DDB_G0268078, found in Dictyostelium discoideum (Social amoeba).